Reading from the N-terminus, the 230-residue chain is 3,4-dihydroxy-2-butanone 4-phosphate synthase (230 aa).

D-ribulose 5-phosphate is bound by residues 42–43 (RE), aspartate 47, 155–159 (RRGHT), and glutamate 179. Position 43 (glutamate 43) interacts with Mg(2+). Residue histidine 158 coordinates Mg(2+).

It belongs to the DHBP synthase family. In terms of assembly, homodimer. Mg(2+) serves as cofactor. It depends on Mn(2+) as a cofactor.

The catalysed reaction is D-ribulose 5-phosphate = (2S)-2-hydroxy-3-oxobutyl phosphate + formate + H(+). The protein operates within cofactor biosynthesis; riboflavin biosynthesis; 2-hydroxy-3-oxobutyl phosphate from D-ribulose 5-phosphate: step 1/1. In terms of biological role, catalyzes the conversion of D-ribulose 5-phosphate to formate and 3,4-dihydroxy-2-butanone 4-phosphate. This Bordetella bronchiseptica (strain ATCC BAA-588 / NCTC 13252 / RB50) (Alcaligenes bronchisepticus) protein is 3,4-dihydroxy-2-butanone 4-phosphate synthase.